Reading from the N-terminus, the 128-residue chain is Ribonuclease P protein component (128 aa).

The protein belongs to the RnpA family. In terms of assembly, consists of a catalytic RNA component (M1 or rnpB) and a protein subunit.

It catalyses the reaction Endonucleolytic cleavage of RNA, removing 5'-extranucleotides from tRNA precursor.. In terms of biological role, RNaseP catalyzes the removal of the 5'-leader sequence from pre-tRNA to produce the mature 5'-terminus. It can also cleave other RNA substrates such as 4.5S RNA. The protein component plays an auxiliary but essential role in vivo by binding to the 5'-leader sequence and broadening the substrate specificity of the ribozyme. The sequence is that of Ribonuclease P protein component from Prochlorococcus marinus (strain MIT 9312).